A 252-amino-acid chain; its full sequence is Probable transcriptional regulatory protein Haur_3030 (252 aa).

This sequence belongs to the TACO1 family.

The protein resides in the cytoplasm. This Herpetosiphon aurantiacus (strain ATCC 23779 / DSM 785 / 114-95) protein is Probable transcriptional regulatory protein Haur_3030.